The chain runs to 402 residues: Phosphoglycerate kinase (402 aa).

Substrate contacts are provided by residues 24–26 (DFN), R40, 63–66 (HFGR), R122, and R155. ATP contacts are provided by residues K206, G297, E328, and 357 to 360 (GGDS).

The protein belongs to the phosphoglycerate kinase family. As to quaternary structure, monomer.

The protein resides in the cytoplasm. It carries out the reaction (2R)-3-phosphoglycerate + ATP = (2R)-3-phospho-glyceroyl phosphate + ADP. It functions in the pathway carbohydrate degradation; glycolysis; pyruvate from D-glyceraldehyde 3-phosphate: step 2/5. The polypeptide is Phosphoglycerate kinase (Synechococcus sp. (strain RCC307)).